The primary structure comprises 71 residues: Brevinin-1V (71 aa).

The N-terminal stretch at 1-22 is a signal peptide; sequence MFTLKKSLLLLFFLGTINLSLC. Positions 23–45 are excised as a propeptide; sequence EQERDADEEERRDDSEERDIEVE. Residues C65 and C71 are joined by a disulfide bond.

It belongs to the frog skin active peptide (FSAP) family. Brevinin subfamily. As to expression, expressed by the skin glands.

It is found in the secreted. Its function is as follows. Has antimicrobial activity against Gram-positive bacteria and fungi but has weak or no activity against a range of Gram-negative bacteria except P.faecalis. Active against the Gram-positive bacteria E.faecium 091299 (MIC=37.5 uM), S.aureus ATCC 25923 (MIC=2.4 uM), S.carnosus KHS (MIC=19 uM), B.licheniformis X39 (MIC=2.4 uM) and R.rhodochrous X15 (MIC=1.2 uM) and a lower activity against E.faecalis 981 (MIC=75 uM). Active against the Gram-negative bacterium P.faecalis X29 (MIC=9.5 uM) is virtually inactive against E.coli ATCC 25922 (MIC=150 uM), and inactive against P.aeruginosa and S.typhi. Has antifungal activity against C.albicans ATCC 2002 (MIC=9.5 uM) and is also active against the slime mold 090223 (MIC=1.2 uM). Has low hemolytic activity against human erythrocytes (LC(50)=75 uM). The sequence is that of Brevinin-1V from Odorrana hainanensis (Odor frog).